Consider the following 465-residue polypeptide: UDP-N-acetylmuramoylalanine--D-glutamate ligase (465 aa).

116–122 (GTNGKTT) lines the ATP pocket.

It belongs to the MurCDEF family.

Its subcellular location is the cytoplasm. It carries out the reaction UDP-N-acetyl-alpha-D-muramoyl-L-alanine + D-glutamate + ATP = UDP-N-acetyl-alpha-D-muramoyl-L-alanyl-D-glutamate + ADP + phosphate + H(+). It functions in the pathway cell wall biogenesis; peptidoglycan biosynthesis. Functionally, cell wall formation. Catalyzes the addition of glutamate to the nucleotide precursor UDP-N-acetylmuramoyl-L-alanine (UMA). The polypeptide is UDP-N-acetylmuramoylalanine--D-glutamate ligase (Thermobifida fusca (strain YX)).